Here is a 519-residue protein sequence, read N- to C-terminus: Cytochrome P450 4A11 (519 aa).

A propeptide spanning residues 1–4 (MSVS) is cleaved from the precursor. E321 is a heme binding site. S440 bears the Phosphoserine mark. C457 contacts heme.

Belongs to the cytochrome P450 family. Requires heme as cofactor. In terms of tissue distribution, expressed in liver. Expressed in S2 and S3 segments of proximal tubules in cortex and outer medulla of kidney.

Its subcellular location is the endoplasmic reticulum membrane. It is found in the microsome membrane. The catalysed reaction is an organic molecule + reduced [NADPH--hemoprotein reductase] + O2 = an alcohol + oxidized [NADPH--hemoprotein reductase] + H2O + H(+). The enzyme catalyses an omega-methyl-long-chain fatty acid + reduced [NADPH--hemoprotein reductase] + O2 = an omega-hydroxy-long-chain fatty acid + oxidized [NADPH--hemoprotein reductase] + H2O + H(+). It catalyses the reaction dodecanoate + reduced [NADPH--hemoprotein reductase] + O2 = 12-hydroxydodecanoate + oxidized [NADPH--hemoprotein reductase] + H2O + H(+). It carries out the reaction tetradecanoate + reduced [NADPH--hemoprotein reductase] + O2 = 14-hydroxytetradecanoate + oxidized [NADPH--hemoprotein reductase] + H2O + H(+). The catalysed reaction is hexadecanoate + reduced [NADPH--hemoprotein reductase] + O2 = 16-hydroxyhexadecanoate + oxidized [NADPH--hemoprotein reductase] + H2O + H(+). The enzyme catalyses (9Z)-octadecenoate + reduced [NADPH--hemoprotein reductase] + O2 = 18-hydroxy-(9Z)-octadecenoate + oxidized [NADPH--hemoprotein reductase] + H2O + H(+). It catalyses the reaction (5Z,8Z,11Z,14Z)-eicosatetraenoate + reduced [NADPH--hemoprotein reductase] + O2 = 20-hydroxy-(5Z,8Z,11Z,14Z)-eicosatetraenoate + oxidized [NADPH--hemoprotein reductase] + H2O + H(+). It carries out the reaction 22-hydroxydocosanoate + reduced [NADPH--hemoprotein reductase] + O2 = 22-oxodocosanoate + oxidized [NADPH--hemoprotein reductase] + 2 H2O + H(+). The catalysed reaction is 22-oxodocosanoate + reduced [NADPH--hemoprotein reductase] + O2 = docosanedioate + oxidized [NADPH--hemoprotein reductase] + H2O + 2 H(+). The enzyme catalyses (9R,10S)-epoxy-octadecanoate + reduced [NADPH--hemoprotein reductase] + O2 = 18-hydroxy-(9R,10S)-epoxy-octadecanoate + oxidized [NADPH--hemoprotein reductase] + H2O + H(+). It catalyses the reaction 3-hydroxyhexadecanoate + reduced [NADPH--hemoprotein reductase] + O2 = 3,16-dihydroxyhexadecanoate + oxidized [NADPH--hemoprotein reductase] + H2O + H(+). It functions in the pathway lipid metabolism; arachidonate metabolism. It participates in lipid metabolism; oxylipin biosynthesis. Its activity is regulated as follows. Activated by cytochrome b5. Its function is as follows. A cytochrome P450 monooxygenase involved in the metabolism of fatty acids and their oxygenated derivatives (oxylipins). Mechanistically, uses molecular oxygen inserting one oxygen atom into a substrate, and reducing the second into a water molecule, with two electrons provided by NADPH via cytochrome P450 reductase (CPR; NADPH-ferrihemoprotein reductase). Catalyzes predominantly the oxidation of the terminal carbon (omega-oxidation) of saturated and unsaturated fatty acids, the catalytic efficiency decreasing in the following order: dodecanoic &gt; tetradecanoic &gt; (9Z)-octadecenoic &gt; (9Z,12Z)-octadecadienoic &gt; hexadecanoic acid. Acts as a major omega-hydroxylase for dodecanoic (lauric) acid in liver. Participates in omega-hydroxylation of (5Z,8Z,11Z,14Z)-eicosatetraenoic acid (arachidonate) to 20-hydroxyeicosatetraenoic acid (20-HETE), a signaling molecule acting both as vasoconstrictive and natriuretic with overall effect on arterial blood pressure. Can also catalyze the oxidation of the penultimate carbon (omega-1 oxidation) of fatty acids with lower efficiency. May contribute to the degradation of saturated very long-chain fatty acids (VLCFAs) such as docosanoic acid, by catalyzing successive omega-oxidations to the corresponding dicarboxylic acid, thereby initiating chain shortening. Omega-hydroxylates (9R,10S)-epoxy-octadecanoate stereoisomer. Plays a minor role in omega-oxidation of long-chain 3-hydroxy fatty acids. Has little activity toward prostaglandins A1 and E1. This is Cytochrome P450 4A11 from Homo sapiens (Human).